We begin with the raw amino-acid sequence, 439 residues long: Xylose isomerase (439 aa).

Residues H100 and D103 contribute to the active site. Mg(2+)-binding residues include E231, E267, H270, D295, D306, D308, and D338.

The protein belongs to the xylose isomerase family. Homotetramer. The cofactor is Mg(2+).

It is found in the cytoplasm. The catalysed reaction is alpha-D-xylose = alpha-D-xylulofuranose. This Rhodopirellula baltica (strain DSM 10527 / NCIMB 13988 / SH1) protein is Xylose isomerase.